The primary structure comprises 244 residues: Type III pantothenate kinase (244 aa).

8–15 (DQGNSACK) contacts ATP. 94 to 97 (GADR) provides a ligand contact to substrate. The active-site Proton acceptor is D96. D117 contributes to the K(+) binding site. T120 lines the ATP pocket. Residue T175 coordinates substrate.

It belongs to the type III pantothenate kinase family. In terms of assembly, homodimer. NH4(+) is required as a cofactor. K(+) serves as cofactor.

It localises to the cytoplasm. It catalyses the reaction (R)-pantothenate + ATP = (R)-4'-phosphopantothenate + ADP + H(+). It functions in the pathway cofactor biosynthesis; coenzyme A biosynthesis; CoA from (R)-pantothenate: step 1/5. In terms of biological role, catalyzes the phosphorylation of pantothenate (Pan), the first step in CoA biosynthesis. In Porphyromonas gingivalis (strain ATCC 33277 / DSM 20709 / CIP 103683 / JCM 12257 / NCTC 11834 / 2561), this protein is Type III pantothenate kinase.